The following is a 264-amino-acid chain: Phosphatidylglycerol--prolipoprotein diacylglyceryl transferase (264 aa).

Transmembrane regions (helical) follow at residues Ile14–Phe34, Leu60–Tyr80, Gly98–Phe118, Ala128–Ile148, Ser176–Ile196, Gly203–Val223, and Gly240–Ser260. Arg143 is a binding site for a 1,2-diacyl-sn-glycero-3-phospho-(1'-sn-glycerol).

Belongs to the Lgt family.

It is found in the cell inner membrane. It carries out the reaction L-cysteinyl-[prolipoprotein] + a 1,2-diacyl-sn-glycero-3-phospho-(1'-sn-glycerol) = an S-1,2-diacyl-sn-glyceryl-L-cysteinyl-[prolipoprotein] + sn-glycerol 1-phosphate + H(+). The protein operates within protein modification; lipoprotein biosynthesis (diacylglyceryl transfer). In terms of biological role, catalyzes the transfer of the diacylglyceryl group from phosphatidylglycerol to the sulfhydryl group of the N-terminal cysteine of a prolipoprotein, the first step in the formation of mature lipoproteins. This Actinobacillus pleuropneumoniae serotype 7 (strain AP76) protein is Phosphatidylglycerol--prolipoprotein diacylglyceryl transferase.